We begin with the raw amino-acid sequence, 312 residues long: Bark storage protein A (312 aa).

The first 24 residues, 1–24, serve as a signal peptide directing secretion; it reads MPQQSMQASLIDPIAEIERSNCKI. N-linked (GlcNAc...) asparagine glycosylation is present at Asn-70.

The protein to wound-inducible poplar endochitinases. Monomer. As to expression, bark.

In terms of biological role, may play a role in nitrogen storage. This chain is Bark storage protein A (BSPA), found in Populus deltoides (Eastern poplar).